Consider the following 138-residue polypeptide: Large ribosomal subunit protein uL16 (138 aa).

This sequence belongs to the universal ribosomal protein uL16 family. Part of the 50S ribosomal subunit.

Binds 23S rRNA and is also seen to make contacts with the A and possibly P site tRNAs. The chain is Large ribosomal subunit protein uL16 from Mycoplasma genitalium (strain ATCC 33530 / DSM 19775 / NCTC 10195 / G37) (Mycoplasmoides genitalium).